Reading from the N-terminus, the 553-residue chain is Serine/threonine-protein kinase WNG2 (553 aa).

Disordered stretches follow at residues 1 to 20 and 88 to 107; these read MMFP…RLQR and NREP…GGAE. Residues 1–64 form the signal peptide; it reads MMFPAVAAPP…GLSWVSVAVA (64 aa). In terms of domain architecture, Protein kinase spans 125–395; that stretch reads FKQLRPVDEF…IGEVMEDPFF (271 aa). Position 186 (lysine 186) interacts with ATP. The Proton acceptor role is filled by aspartate 278. The segment at 432–553 is disordered; the sequence is REKADAAAKA…GFNKEDAQES (122 aa). The span at 438–451 shows a compositional bias: low complexity; it reads AAKAADNAEVPAAK. Composition is skewed to basic and acidic residues over residues 465–486, 494–524, and 531–553; these read GDRD…EKGR, EGNH…ENRE, and QREE…AQES.

It belongs to the protein kinase superfamily. STE Ser/Thr protein kinase family. WNG subfamily. Requires Mg(2+) as cofactor.

The protein resides in the cytoplasmic granule. The protein localises to the secreted. Its subcellular location is the parasitophorous vacuole lumen. The catalysed reaction is L-seryl-[protein] + ATP = O-phospho-L-seryl-[protein] + ADP + H(+). It carries out the reaction L-threonyl-[protein] + ATP = O-phospho-L-threonyl-[protein] + ADP + H(+). Functionally, probable serine/threonine-protein kinase. This chain is Serine/threonine-protein kinase WNG2, found in Toxoplasma gondii.